A 115-amino-acid polypeptide reads, in one-letter code: Migration and invasion enhancer 1 (115 aa).

S2 is subject to N-acetylserine. C30 and C33 are disulfide-bonded. C112 is lipidated: S-geranylgeranyl cysteine. A propeptide spans 113 to 115 (VIL) (removed in mature form).

Belongs to the SelWTH family. As to quaternary structure, interacts with GPX1. Post-translationally, isoprenylation facilitates association with the plasma membrane and enhances the migratory phenotype of cells by inducing increased filopodia formation. In terms of tissue distribution, widely expressed with highest levels in kidney followed by brain and testis.

It localises to the cytoplasm. Its subcellular location is the cytosol. It is found in the cell membrane. Its function is as follows. Increases cell migration by inducing filopodia formation at the leading edge of migrating cells. Plays a role in regulation of apoptosis, possibly through control of CASP3. May be involved in a redox-related process. The chain is Migration and invasion enhancer 1 (Mien1) from Mus musculus (Mouse).